A 600-amino-acid chain; its full sequence is Calcium/calmodulin-dependent serine/threonine-protein kinase 1 (600 aa).

The disordered stretch occupies residues 1-99 (MGLCHGKSAA…GGFKRPFPPP (99 aa)). A compositionally biased stretch (low complexity) spans 24–56 (TRVAEAAAAPAKPASPAPSAAAAAAAPAKPGTP). Polar residues predominate over residues 74–85 (YKGSPANSSVAS). The region spanning 147-409 (YELGREVGRG…AAQALCHPWI (263 aa)) is the Protein kinase domain. ATP-binding positions include 153–161 (VGRGHFGYT) and K179. The active-site Proton acceptor is the D275.

It belongs to the protein kinase superfamily. Ser/Thr protein kinase family. Autophosphorylated. In terms of tissue distribution, highly expressed in roots in the zone of cell division. Expressed in leaf mesophyll cells and at lower levels in mature stems.

The catalysed reaction is L-seryl-[protein] + ATP = O-phospho-L-seryl-[protein] + ADP + H(+). It carries out the reaction L-threonyl-[protein] + ATP = O-phospho-L-threonyl-[protein] + ADP + H(+). Activated by the binding of calmodulin-like protein 1 (CML1) in the presence of Ca(2+). In terms of biological role, possesses kinase activity in vitro. This is Calcium/calmodulin-dependent serine/threonine-protein kinase 1 (CAMK1) from Oryza sativa subsp. japonica (Rice).